Consider the following 649-residue polypeptide: L-ornithine N(5)-monooxygenase (649 aa).

Residues glutamate 72–histidine 80 and glutamine 91 contribute to the FAD site. Lysine 96 contributes to the substrate binding site. Position 157 (valine 157) interacts with FAD. NADP(+)-binding positions include alanine 289–serine 292 and arginine 314. Substrate is bound by residues asparagine 328–alanine 331 and asparagine 359. Position 359 to 361 (asparagine 359 to serine 361) interacts with NADP(+). A disordered region spans residues alanine 512–glutamate 547. Residues serine 520–serine 536 show a composition bias toward low complexity. Polar residues predominate over residues glutamine 537–glutamate 547. Position 569-571 (serine 569–leucine 571) interacts with FAD. Serine 572 contacts substrate. Positions leucine 585–serine 611 are disordered. Residues threonine 596–serine 611 show a composition bias toward low complexity.

It belongs to the lysine N(6)-hydroxylase/L-ornithine N(5)-oxygenase family. Homotetramer. The cofactor is FAD.

The enzyme catalyses L-ornithine + NADPH + O2 = N(5)-hydroxy-L-ornithine + NADP(+) + H2O. It carries out the reaction L-ornithine + NADH + O2 = N(5)-hydroxy-L-ornithine + NAD(+) + H2O. It functions in the pathway siderophore biosynthesis; ferrichrome biosynthesis. Functionally, catalyzes the conversion of L-ornithine to N(5)-hydroxyornithine, the first step in the biosynthesis of all hydroxamate-containing siderophores, such as ferrichrome. The polypeptide is L-ornithine N(5)-monooxygenase (SID1) (Mycosarcoma maydis (Corn smut fungus)).